A 410-amino-acid polypeptide reads, in one-letter code: DNA replication and repair protein RecF (410 aa).

30-37 contributes to the ATP binding site; the sequence is GPNGHGKT.

The protein belongs to the RecF family.

The protein resides in the cytoplasm. Its function is as follows. The RecF protein is involved in DNA metabolism; it is required for DNA replication and normal SOS inducibility. RecF binds preferentially to single-stranded, linear DNA. It also seems to bind ATP. The polypeptide is DNA replication and repair protein RecF (Rhodococcus jostii (strain RHA1)).